The chain runs to 90 residues: DNA-binding protein HU-beta (90 aa).

This sequence belongs to the bacterial histone-like protein family. Heterodimer of an alpha and a beta chain.

Functionally, histone-like DNA-binding protein which is capable of wrapping DNA to stabilize it, and thus to prevent its denaturation under extreme environmental conditions. This Pseudomonas aeruginosa (strain ATCC 15692 / DSM 22644 / CIP 104116 / JCM 14847 / LMG 12228 / 1C / PRS 101 / PAO1) protein is DNA-binding protein HU-beta (hupB).